The following is a 504-amino-acid chain: Maturase K (504 aa).

This sequence belongs to the intron maturase 2 family. MatK subfamily.

The protein resides in the plastid. Its subcellular location is the chloroplast. In terms of biological role, usually encoded in the trnK tRNA gene intron. Probably assists in splicing its own and other chloroplast group II introns. This chain is Maturase K, found in Olimarabidopsis pumila (Dwarf rocket).